The primary structure comprises 197 residues: Holliday junction branch migration complex subunit RuvA (197 aa).

The domain I stretch occupies residues 1 to 64; it reads MYDYIKGIYK…DDSINLYGFF (64 aa). Residues 65–143 are domain II; that stretch reads TEEERDMFNL…NDDIISDIDD (79 aa). Residues 144-154 are flexible linker; sequence LDSISNFQLHS. The tract at residues 154 to 197 is domain III; it reads SAEALEALMSLGYSQKESEKALKNVDKENSLEDIIKACLKYLMG.

It belongs to the RuvA family. Homotetramer. Forms an RuvA(8)-RuvB(12)-Holliday junction (HJ) complex. HJ DNA is sandwiched between 2 RuvA tetramers; dsDNA enters through RuvA and exits via RuvB. An RuvB hexamer assembles on each DNA strand where it exits the tetramer. Each RuvB hexamer is contacted by two RuvA subunits (via domain III) on 2 adjacent RuvB subunits; this complex drives branch migration. In the full resolvosome a probable DNA-RuvA(4)-RuvB(12)-RuvC(2) complex forms which resolves the HJ.

The protein resides in the cytoplasm. Its function is as follows. The RuvA-RuvB-RuvC complex processes Holliday junction (HJ) DNA during genetic recombination and DNA repair, while the RuvA-RuvB complex plays an important role in the rescue of blocked DNA replication forks via replication fork reversal (RFR). RuvA specifically binds to HJ cruciform DNA, conferring on it an open structure. The RuvB hexamer acts as an ATP-dependent pump, pulling dsDNA into and through the RuvAB complex. HJ branch migration allows RuvC to scan DNA until it finds its consensus sequence, where it cleaves and resolves the cruciform DNA. The chain is Holliday junction branch migration complex subunit RuvA from Clostridium tetani (strain Massachusetts / E88).